The chain runs to 453 residues: MAKRRQKKRTHAQLTPEQEQGIPKSMVIRVGQTSLANHSLNQLVKDFRQIMQPHTAIKLKERKSNKLKDFVVMCGPLGVTHLFMFTQSEKTGNVSLKIARTPQGPTVTFQVLDYSLGRDIKKFLKRPKSLNNDDVLNPPLLVLNGFSTSKRSGEDDQDVNVEKVIVSMFQNIFPPLNPARTSLNSIKRVFMINKDRETGEISMRHYFIDIREVEISRNLKRLYKAKNNLSKTVPNLHRKEDISSLILDHDLGAYTSESEIEDDAIVRVVDNQDVKAKHSQSLKSQRTPVEKKDNKEREKETEEEDVEMEEPKPSENLQPTPRKKAIKLTELGPRLTLKLVKIEEGICSGKVLHHEFVQKSSEEIKALEKRHAAKMRLKEQRKKEQEENIAKKKAVKDAKKQRKLERRKARAAEGGEGQGKDDAMSDDESSSSDSEHYGSVPEDLDSDLFSEVE.

Positions Met-1–His-11 are enriched in basic residues. 3 disordered regions span residues Met-1–Ile-22, Lys-275–Lys-324, and Lys-374–Glu-453. Residues Met-26 to Ser-348 enclose the Brix domain. Residues Pro-288–Glu-300 are compositionally biased toward basic and acidic residues. A Phosphothreonine modification is found at Thr-301. Positions Lys-374–Ala-398 are enriched in basic and acidic residues. Over residues Lys-399 to Ala-409 the composition is skewed to basic residues. Over residues Arg-410 to Ala-423 the composition is skewed to basic and acidic residues. Acidic residues predominate over residues Glu-442–Glu-453.

In terms of assembly, part of a complex that includes BRX1, RPF1, RPF2 and SSF1 or SSF2.

The protein resides in the nucleus. It localises to the nucleolus. Its function is as follows. Required for biogenesis of the 60S ribosomal subunit. The polypeptide is Ribosome biogenesis protein SSF1 (SSF1) (Saccharomyces cerevisiae (strain ATCC 204508 / S288c) (Baker's yeast)).